The chain runs to 537 residues: Pheophorbide a oxygenase, chloroplastic (537 aa).

The N-terminal 49 residues, 1-49, are a transit peptide targeting the chloroplast; it reads MSVVLLSSTSATITKSQSKKIPFLSPTTKFPLKVSISPSRSKLFHNPLR. The interval 51 to 77 is disordered; sequence AAPPSVPTSDSTEEKRIEEEYGGDKEE. Over residues 62-77 the composition is skewed to basic and acidic residues; that stretch reads TEEKRIEEEYGGDKEE. In terms of domain architecture, Rieske spans 88–200; it reads WYPVSLVEDL…TMVSQGLLFV (113 aa). Positions 130, 132, 150, and 153 each coordinate [2Fe-2S] cluster.

As to quaternary structure, interacts with HCAR, SGR1, RCCR, PPH and the LHCII complex. Part of a SGR1-CCE-LHCII complex, which acts in chlorophyll breakdown.

It localises to the plastid. The protein resides in the chloroplast thylakoid membrane. It catalyses the reaction pheophorbide a + 2 reduced [2Fe-2S]-[ferredoxin] + O2 + 2 H(+) = red chlorophyll catabolite + 2 oxidized [2Fe-2S]-[ferredoxin]. It participates in porphyrin-containing compound metabolism; chlorophyll degradation. With respect to regulation, might be regulated by a phosphorylation/dephosphorylation mechanism. Functionally, catalyzes the key reaction of chlorophyll catabolism, porphyrin macrocycle cleavage of pheophorbide a (pheide a) to a primary fluorescent catabolite (pFCC). Works in a two-step reaction with red chlorophyll catabolite reductase (RCCR). Creates the intermediate RCC through the opening of the porphyrin macrocycle by the introduction of one atom of molecular oxygen at the alpha-methine bridge. Seems to be specific for pheide a. Belongs to the chlorophyll catabolic enzymes (CCEs). This is Pheophorbide a oxygenase, chloroplastic (PAO) from Arabidopsis thaliana (Mouse-ear cress).